A 455-amino-acid chain; its full sequence is tRNA modification GTPase MnmE (455 aa).

(6S)-5-formyl-5,6,7,8-tetrahydrofolate is bound by residues R24, E81, and K120. The TrmE-type G domain occupies 216–378 (GMTVVIAGRP…LREHLKACMG (163 aa)). Residue N226 coordinates K(+). Residues 226-231 (NAGKSS), 245-251 (TDIAGTT), 270-273 (DTAG), 335-338 (NKAD), and 359-361 (SAR) each bind GTP. Residue S230 coordinates Mg(2+). K(+)-binding residues include T245, I247, and T250. Position 251 (T251) interacts with Mg(2+). A (6S)-5-formyl-5,6,7,8-tetrahydrofolate-binding site is contributed by K455.

This sequence belongs to the TRAFAC class TrmE-Era-EngA-EngB-Septin-like GTPase superfamily. TrmE GTPase family. In terms of assembly, homodimer. Heterotetramer of two MnmE and two MnmG subunits. The cofactor is K(+).

It localises to the cytoplasm. In terms of biological role, exhibits a very high intrinsic GTPase hydrolysis rate. Involved in the addition of a carboxymethylaminomethyl (cmnm) group at the wobble position (U34) of certain tRNAs, forming tRNA-cmnm(5)s(2)U34. The chain is tRNA modification GTPase MnmE from Pseudomonas aeruginosa (strain UCBPP-PA14).